Here is a 403-residue protein sequence, read N- to C-terminus: Na(+)/H(+) antiporter NhaH (403 aa).

Helical transmembrane passes span 7–27 (VFIQILLLLAISVTVIAIAKL), 34–54 (VALVLVGLVLGLTQLPFIEEA), 99–119 (LAFLGTFISSLTIGAASYFLL), 125–145 (VAFTFAALMSATDPISVLSIF), 168–188 (IAVVLFKIASIYLLTYIEMGW), 196–216 (FMFLKFAVGGALVGLILGYVF), 228–245 (LEVAFSALLFFGSYFIAE), 250–272 (SGVIAVVVGGFVFGDYGAKIGMS), 282–302 (FWDSVTLLANALIFLMVGLEI), 311–331 (WGYIVGAIAIVLVGRTIAVYI), 345–365 (ILINWGGLRGSLSIALALSLP), and 373–393 (QVLLLTFSVVLFSLIVQGLTL).

This sequence belongs to the monovalent cation:proton antiporter 1 (CPA1) transporter (TC 2.A.36) family.

Its subcellular location is the cell membrane. Functionally, na(+)/H(+) antiporter that extrudes sodium in exchange for external protons. Can also transport lithium. This chain is Na(+)/H(+) antiporter NhaH (nhaH), found in Halobacillus aidingensis.